The primary structure comprises 150 residues: UPF0201 protein APE_1751 (150 aa).

Belongs to the UPF0201 family.

In Aeropyrum pernix (strain ATCC 700893 / DSM 11879 / JCM 9820 / NBRC 100138 / K1), this protein is UPF0201 protein APE_1751.